The primary structure comprises 662 residues: Interferon-induced GTP-binding protein Mx1 (662 aa).

Residue M1 is modified to N-acetylmethionine. The region spanning 67–340 (DLALPAIAVI…LITHICKSLP (274 aa)) is the Dynamin-type G domain. The G1 motif stretch occupies residues 77-84 (GDQSSGKS). 77 to 84 (GDQSSGKS) is a GTP binding site. Residues 102–104 (VTR) form a G2 motif region. The G3 motif stretch occupies residues 178–181 (DLPG). Residues 178–182 (DLPGI) and 247–250 (TKPD) each bind GTP. The segment at 247–250 (TKPD) is G4 motif. The segment at 279 to 282 (KCRG) is G5 motif. The segment at 341–366 (LLENQIRESHQRITEELQKYGVDVPE) is bundle signaling element (BSE). A middle domain region spans residues 366-533 (EDENEKMFFL…HFQMEQIVYC (168 aa)). Residues 367 to 632 (DENEKMFFLI…KDTYSWLLKE (266 aa)) are stalk. A critical for lipid-binding region spans residues 554–557 (KKKK). Residues 574–662 (MEEIFQHLMA…ARRRLAQFPG (89 aa)) form the GED domain.

This sequence belongs to the TRAFAC class dynamin-like GTPase superfamily. Dynamin/Fzo/YdjA family. In terms of assembly, homooligomer. Oligomerizes into multimeric filamentous or ring-like structures by virtue of its stalk domain. Oligomerization is critical for GTPase activity, protein stability, and recognition of viral target structures. Interacts with TRPC1, TRPC3, TRPC4, TRPC5, TRPC6 and TRPC7. Interacts with HSPA5. Interacts with TUBB/TUBB5. Interacts with DDX39A and DDX39B. ISGylated.

Its subcellular location is the cytoplasm. It is found in the endoplasmic reticulum membrane. The protein localises to the perinuclear region. Functionally, interferon-induced dynamin-like GTPase with antiviral activity. This Pongo abelii (Sumatran orangutan) protein is Interferon-induced GTP-binding protein Mx1 (MX1).